The following is a 355-amino-acid chain: Uroporphyrinogen decarboxylase (355 aa).

Residues 27-31 (RQAGR), aspartate 78, tyrosine 155, serine 210, and histidine 328 each bind substrate.

Belongs to the uroporphyrinogen decarboxylase family. In terms of assembly, homodimer.

The protein resides in the cytoplasm. It carries out the reaction uroporphyrinogen III + 4 H(+) = coproporphyrinogen III + 4 CO2. The protein operates within porphyrin-containing compound metabolism; protoporphyrin-IX biosynthesis; coproporphyrinogen-III from 5-aminolevulinate: step 4/4. Catalyzes the decarboxylation of four acetate groups of uroporphyrinogen-III to yield coproporphyrinogen-III. The sequence is that of Uroporphyrinogen decarboxylase from Pseudomonas aeruginosa (strain LESB58).